The sequence spans 509 residues: Cobyric acid synthase (509 aa).

A GATase cobBQ-type domain is found at 262-459; sequence EIKVGIIKLP…IHGIFENDNW (198 aa). The Nucleophile role is filled by cysteine 343. Histidine 451 is an active-site residue.

This sequence belongs to the CobB/CobQ family. CobQ subfamily.

It participates in cofactor biosynthesis; adenosylcobalamin biosynthesis. Catalyzes amidations at positions B, D, E, and G on adenosylcobyrinic A,C-diamide. NH(2) groups are provided by glutamine, and one molecule of ATP is hydrogenolyzed for each amidation. The sequence is that of Cobyric acid synthase from Prochlorococcus marinus (strain AS9601).